The sequence spans 527 residues: Estrogen receptor beta (527 aa).

A modulating region spans residues Met-1–Phe-145. A phosphoserine; by MAPK mark is found at Ser-84 and Ser-102. NR C4-type zinc fingers lie at residues Cys-146–Cys-166 and Cys-182–Cys-206. The nuclear receptor DNA-binding region spans Cys-146–Met-211. Positions Ser-261–His-495 constitute an NR LBD domain.

This sequence belongs to the nuclear hormone receptor family. NR3 subfamily. As to quaternary structure, binds DNA as a homodimer. Can form a heterodimer with ESR1. Interacts with NCOA1, NCOA3, NCOA5 and NCOA6 coactivators, leading to a strong increase of transcription of target genes. Interacts with UBE1C and AKAP13. Interacts with DNTTIP2. Interacts with CCDC62 in the presence of estradiol/E2; this interaction seems to enhance the transcription of target genes. Interacts with DNAAF4. Interacts with PRMT2. Interacts with CCAR2 (via N-terminus) in a ligand-independent manner. Interacts with RBM39, in the presence of estradiol (E2). Interacts with STUB1/CHIP. In terms of processing, phosphorylation at Ser-84 and Ser-102 recruits NCOA1. Present in granulosa cells of antral follicles in various stages of follicular growth.

It is found in the nucleus. Nuclear hormone receptor. Binds estrogens with an affinity similar to that of ESR1ESR1/ER-alpha, and activates expression of reporter genes containing estrogen response elements (ERE) in an estrogen-dependent manner. In Bos taurus (Bovine), this protein is Estrogen receptor beta (ESR2).